A 118-amino-acid polypeptide reads, in one-letter code: UPF0148 protein M1627_1409 (118 aa).

It belongs to the UPF0148 family.

The chain is UPF0148 protein M1627_1409 from Saccharolobus islandicus (strain M.16.27) (Sulfolobus islandicus).